Here is a 142-residue protein sequence, read N- to C-terminus: Sorting nexin-3 (142 aa).

Positions 21-138 (NFLEIEVRNP…AAFVQDPNWD (118 aa)) constitute a PX domain. Residues R64, S66, K90, R95, and R104 each contribute to the a 1,2-diacyl-sn-glycero-3-phospho-(1D-myo-inositol-3-phosphate) site.

Belongs to the sorting nexin family.

The protein localises to the cytoplasm. It localises to the golgi apparatus membrane. The protein resides in the prevacuolar compartment membrane. Required for retention of late Golgi membrane proteins. Component of the retrieval machinery that functions by direct interaction with the cytosolic tails of certain TGN membrane proteins during the sorting/budding process at the prevacuolar compartment. Binds phosphatidylinositol 3-phosphate (PtdIns(P3)). The protein is Sorting nexin-3 (snx-3) of Neurospora crassa (strain ATCC 24698 / 74-OR23-1A / CBS 708.71 / DSM 1257 / FGSC 987).